Consider the following 173-residue polypeptide: Flagellar assembly factor FliW (173 aa).

Residues 152 to 173 (STTVRRKASPPAAGEDKGDVQE) are disordered.

Belongs to the FliW family. In terms of assembly, interacts with translational regulator CsrA and flagellin(s).

It is found in the cytoplasm. In terms of biological role, acts as an anti-CsrA protein, binds CsrA and prevents it from repressing translation of its target genes, one of which is flagellin. Binds to flagellin and participates in the assembly of the flagellum. This chain is Flagellar assembly factor FliW, found in Nitratidesulfovibrio vulgaris (strain ATCC 29579 / DSM 644 / CCUG 34227 / NCIMB 8303 / VKM B-1760 / Hildenborough) (Desulfovibrio vulgaris).